The primary structure comprises 321 residues: Peroxidase 5 (321 aa).

The N-terminal stretch at 1 to 24 is a signal peptide; sequence MERFSLRFVLMMVSIILTSSICQA. At Gln-25 the chain carries Pyrrolidone carboxylic acid. 4 disulfide bridges follow: Cys-35–Cys-115, Cys-68–Cys-73, Cys-121–Cys-317, and Cys-201–Cys-227. His-66 (proton acceptor) is an active-site residue. Ca(2+)-binding residues include Asp-67, Val-70, Gly-72, Asp-74, and Ser-76. A substrate-binding site is contributed by Pro-164. A heme b-binding site is contributed by His-194. Thr-195 contributes to the Ca(2+) binding site. Asn-211 carries N-linked (GlcNAc...) asparagine glycosylation. Ca(2+)-binding residues include Asp-240, Thr-243, and Asp-248. A glycan (N-linked (GlcNAc...) asparagine) is linked at Asn-285.

This sequence belongs to the peroxidase family. Classical plant (class III) peroxidase subfamily. Requires heme b as cofactor. Ca(2+) is required as a cofactor.

It is found in the secreted. The catalysed reaction is 2 a phenolic donor + H2O2 = 2 a phenolic radical donor + 2 H2O. Removal of H(2)O(2), oxidation of toxic reductants, biosynthesis and degradation of lignin, suberization, auxin catabolism, response to environmental stresses such as wounding, pathogen attack and oxidative stress. These functions might be dependent on each isozyme/isoform in each plant tissue. This chain is Peroxidase 5 (PER5), found in Arabidopsis thaliana (Mouse-ear cress).